The primary structure comprises 92 residues: Large ribosomal subunit protein bL28 (92 aa).

The segment at 1-34 is disordered; sequence MGRECEITGKKTMFGNNVPRKGLSRKKGGGGQHI.

This sequence belongs to the bacterial ribosomal protein bL28 family.

In Borrelia turicatae (strain 91E135), this protein is Large ribosomal subunit protein bL28.